The following is a 291-amino-acid chain: Putative ribosomal protein uL16-like, mitochondrial (291 aa).

A mitochondrion-targeting transit peptide spans Met-1–Leu-27. Positions Val-127–Gln-137 are enriched in basic and acidic residues. The disordered stretch occupies residues Val-127–Arg-173. Over residues Arg-163 to Arg-173 the composition is skewed to basic residues.

The protein belongs to the universal ribosomal protein uL16 family.

Its subcellular location is the mitochondrion. Its function is as follows. Could be a component of the large subunit of mitochondrial ribosome. The chain is Putative ribosomal protein uL16-like, mitochondrial from Arabidopsis thaliana (Mouse-ear cress).